Reading from the N-terminus, the 305-residue chain is Short-chain dehydrogenase/reductase VdtF (305 aa).

NADP(+) contacts are provided by L28 and N98. S192 acts as the Proton donor in catalysis. Residues Y206, K210, and T241 each contribute to the NADP(+) site. The active-site Proton acceptor is the Y206. The active-site Lowers pKa of active site Tyr is the K210.

It belongs to the short-chain dehydrogenases/reductases (SDR) family.

It carries out the reaction methyl 2-[(3S)-9,10-dihydroxy-7-methoxy-1-oxo-1H,3H,4H-naphtho[2,3-c]pyran-3-yl]acetate + AH2 = semiviriditoxin + A. The enzyme catalyses 9,10-dihydroxy-7-methoxy-3-(2-oxopropyl)-1H-benzo[g]isochromen-1-one + AH2 = (3S)-9,10-dihydroxy-7-methoxy-3-(2-oxopropyl)-1H,3H,4H-naphtho[2,3-c]pyran-1-one + A. The protein operates within secondary metabolite biosynthesis. Short-chain dehydrogenase/reductase; part of the gene cluster that mediates the biosynthesis of viriditoxin, one of the 'classical' secondary metabolites produced by fungi and that has antibacterial activity. The first step is performed by the polyketide synthase VdtA which condenses one acetyl-CoA and 6 malonyl-CoA units to form the heptaketide monomer backbone of viriditoxin. The product of VdtA is then O-methylated on C7 by the O-methyltransferase VdtC. The O-methyl group is important for the stereoselective coupling of the monomers at the final step of viriditoxin biosynthesis. The short-chain dehydrogenase/reductase VdtF then acts as a stereospecific reductase converting the pyrone to dihydropyrone via the reduction of the C3-C4 double bond. The FAD-binding monooxygenase VdtE then converts the ketone group into a methyl-ester group to yield semi-viriditoxin. Finally, the laccase VdtB is involved in dimerization of 2 semi-viriditoxin molecules to yield the final viriditoxin. VdtB is responsible for the regioselective 6,6'-coupling of semi-viriditoxin, which yields (M)-viriditoxin and (P)-viriditoxin at a ratio of 1:2. The non-catalytic carboxylesterase-like protein VdtD affects the stereochemistical outcome of the coupling. The highly reducing polyketide synthase VdtX is not involved in viriditoxin synthesis, but might possibly play a role in the production of additional metabolites not identified yet. The polypeptide is Short-chain dehydrogenase/reductase VdtF (Byssochlamys spectabilis (Paecilomyces variotii)).